Here is a 560-residue protein sequence, read N- to C-terminus: NAD-dependent malic enzyme (560 aa).

Tyrosine 100 (proton donor) is an active-site residue. An NAD(+)-binding site is contributed by arginine 153. Lysine 171 functions as the Proton acceptor in the catalytic mechanism. A divalent metal cation-binding residues include glutamate 242, aspartate 243, and aspartate 266. Residues aspartate 266 and asparagine 413 each coordinate NAD(+).

It belongs to the malic enzymes family. As to quaternary structure, homotetramer. Mg(2+) serves as cofactor. Mn(2+) is required as a cofactor.

It catalyses the reaction (S)-malate + NAD(+) = pyruvate + CO2 + NADH. The catalysed reaction is oxaloacetate + H(+) = pyruvate + CO2. This is NAD-dependent malic enzyme from Psychrobacter arcticus (strain DSM 17307 / VKM B-2377 / 273-4).